Consider the following 102-residue polypeptide: Ferredoxin, 2Fe-2S (102 aa).

Positions 11, 24, 56, and 60 each coordinate [2Fe-2S] cluster.

Belongs to the 2Fe2S Shethna-type ferredoxin family. [2Fe-2S] cluster is required as a cofactor.

Functionally, ferredoxins are iron-sulfur proteins that transfer electrons in a wide variety of metabolic reactions. The polypeptide is Ferredoxin, 2Fe-2S (Clostridium pasteurianum).